Here is a 351-residue protein sequence, read N- to C-terminus: Protein TBATA (351 aa).

Disordered regions lie at residues 16-40 (KAEL…PQKE), 167-186 (KKEK…KYSA), 195-216 (STRA…SSRH), and 292-351 (EVHE…RAES). The span at 167–181 (KKEKEQKEEPLREQG) shows a compositional bias: basic and acidic residues. Basic and acidic residues-rich tracts occupy residues 292 to 302 (EVHEPPQEKQE) and 340 to 351 (TEKKTSKPRAES).

It belongs to the TBATA family.

The protein resides in the cytoplasm. It localises to the cytosol. Functionally, may play a role in spermatid differentiation. Modulates thymic stromal cell proliferation and thymus function. This is Protein TBATA (TBATA) from Homo sapiens (Human).